The sequence spans 338 residues: 5-dehydro-2-deoxygluconokinase (338 aa).

It belongs to the carbohydrate kinase PfkB family.

The catalysed reaction is 5-dehydro-2-deoxy-D-gluconate + ATP = 6-phospho-5-dehydro-2-deoxy-D-gluconate + ADP + H(+). The protein operates within polyol metabolism; myo-inositol degradation into acetyl-CoA; acetyl-CoA from myo-inositol: step 5/7. Catalyzes the phosphorylation of 5-dehydro-2-deoxy-D-gluconate (2-deoxy-5-keto-D-gluconate or DKG) to 6-phospho-5-dehydro-2-deoxy-D-gluconate (DKGP). This is 5-dehydro-2-deoxygluconokinase from Mesomycoplasma hyopneumoniae (strain 232) (Mycoplasma hyopneumoniae).